A 283-amino-acid chain; its full sequence is PTS system mannose-specific EIID component (283 aa).

At methionine 1 the chain carries N-formylmethionine. Residues 1–14 (MVDTTQTTTEKKLT) lie on the Cytoplasmic side of the membrane. One can recognise a PTS EIID domain in the interval 11-281 (KKLTQSDIRG…GIAGYACGLL (271 aa)). The stretch at 15–52 (QSDIRGVFLRSNLFQGSWNFERMQALGFCFSMVPAIRR) is an intramembrane region. The Cytoplasmic portion of the chain corresponds to 53-59 (LYPENNE). An intramembrane segment occupies 60 to 92 (ARKQAIRRHLEFFNTQPFVAAPILGVTLALEEQ). At 93–100 (RANGAEID) the chain is on the cytoplasmic side. The segment at 101 to 140 (DGAINGIKVGLMGPLAGVGDPIFWGTVRPVFAALGAGIAM) is a transmembrane helix. Residues 141–144 (SGSL) are Periplasmic-facing. The hydrophobic stretch at 145–173 (LGPLLFFILFNLVRLATRYYGVAYGYSKG) threads the membrane. Residues 174-183 (IDIVKDMGGG) lie on the Cytoplasmic side of the membrane. A transmembrane span lies at residues 184-209 (FLQKLTEGASILGLFVMGALVNKWTH). Residues 210 to 241 (VNIPLVVSRITDQTGKEHVTTVQTILDQLMPG) lie on the Periplasmic side of the membrane. Over 242-255 (LVPLLLTFACMWLL) the chain traverses the membrane. The Cytoplasmic segment spans residues 256–261 (RKKVNP). At 262 to 280 (LWIIVGFFVIGIAGYACGL) the chain is embedded in the membrane. At 281–283 (LGL) the chain is on the periplasmic side.

In terms of assembly, homotrimer of protomers that are composed of two subunits, IIC and IID.

Its subcellular location is the cell inner membrane. Its function is as follows. The phosphoenolpyruvate-dependent sugar phosphotransferase system (sugar PTS), a major carbohydrate active transport system, catalyzes the phosphorylation of incoming sugar substrates concomitantly with their translocation across the cell membrane. The enzyme II ManXYZ PTS system is involved in mannose transport. This chain is PTS system mannose-specific EIID component (manZ), found in Escherichia coli O157:H7.